A 301-amino-acid polypeptide reads, in one-letter code: Acetylglutamate kinase (301 aa).

Substrate is bound by residues 72–73 (GG), arginine 94, and asparagine 199.

Belongs to the acetylglutamate kinase family. ArgB subfamily.

Its subcellular location is the cytoplasm. The enzyme catalyses N-acetyl-L-glutamate + ATP = N-acetyl-L-glutamyl 5-phosphate + ADP. The protein operates within amino-acid biosynthesis; L-arginine biosynthesis; N(2)-acetyl-L-ornithine from L-glutamate: step 2/4. Functionally, catalyzes the ATP-dependent phosphorylation of N-acetyl-L-glutamate. The chain is Acetylglutamate kinase from Bartonella bacilliformis (strain ATCC 35685 / KC583 / Herrer 020/F12,63).